The primary structure comprises 260 residues: Thymidylate synthase (260 aa).

It participates in pyrimidine metabolism; dTTP biosynthesis. Its function is as follows. Is able to catalyze the biosynthesis of dTMP using dUMP, tetrahydrofolate and formaldehyde in vitro, i.e. a reaction equivalent to that catalyzed by bacterial thymidylate synthases (EC 2.1.1.45). However, M.jannaschii like most methanogenic Archaea lacks folates, thus the physiological cosubstrate is unknown but is likely one of the non-methylated methanopterin biosynthetic intermediates. This is Thymidylate synthase from Methanocaldococcus jannaschii (strain ATCC 43067 / DSM 2661 / JAL-1 / JCM 10045 / NBRC 100440) (Methanococcus jannaschii).